The sequence spans 598 residues: UvrABC system protein C (598 aa).

In terms of domain architecture, GIY-YIG spans 13-91; sequence TLPGVYRMVD…IKGLKPRFNI (79 aa). The 36-residue stretch at 200 to 235 folds into the UVR domain; it reads TALTEEITAQMNAAAENLDFETAAYLRDRLRMLATV.

It belongs to the UvrC family. Interacts with UvrB in an incision complex.

It localises to the cytoplasm. Its function is as follows. The UvrABC repair system catalyzes the recognition and processing of DNA lesions. UvrC both incises the 5' and 3' sides of the lesion. The N-terminal half is responsible for the 3' incision and the C-terminal half is responsible for the 5' incision. This chain is UvrABC system protein C, found in Thiobacillus denitrificans (strain ATCC 25259 / T1).